We begin with the raw amino-acid sequence, 99 residues long: Large ribosomal subunit protein uL23 (99 aa).

It belongs to the universal ribosomal protein uL23 family. In terms of assembly, part of the 50S ribosomal subunit. Contacts protein L29, and trigger factor when it is bound to the ribosome.

In terms of biological role, one of the early assembly proteins it binds 23S rRNA. One of the proteins that surrounds the polypeptide exit tunnel on the outside of the ribosome. Forms the main docking site for trigger factor binding to the ribosome. This is Large ribosomal subunit protein uL23 from Pseudomonas savastanoi pv. phaseolicola (strain 1448A / Race 6) (Pseudomonas syringae pv. phaseolicola (strain 1448A / Race 6)).